A 4599-amino-acid chain; its full sequence is Low-density lipoprotein receptor-related protein 1B (4599 aa).

Positions 1-20 are cleaved as a signal peptide; that stretch reads MSEFLLALLTLSGLLPIARV. Residues 25–4444 lie on the Extracellular side of the membrane; the sequence is ADRDQQLCDP…KSDHISTRSI (4420 aa). LDL-receptor class A domains follow at residues 31–70 and 76–114; these read LCDPGEFLCHDHVTCVSQSWLCDGDPDCPDDSDESLDTCP and KCPLNHIACLGTNKCVHLSQLCNGVLDCPDGYDEGVHCQ. Disulfide bonds link C32–C45, C39–C58, C52–C69, C77–C90, C84–C103, C97–C113, C120–C129, C125–C138, C140–C153, C159–C169, C165–C178, and C180–C193. The EGF-like 1 domain maps to 116 to 154; that stretch reads LLSNCQQLNCQYKCTMVRNSTRCYCEDGFEITEDGRSCK. N134 carries N-linked (GlcNAc...) asparagine glycosylation. Residues 155–194 enclose the EGF-like 2; calcium-binding domain; it reads DQDECAVYGTCSQTCRNTHGSYTCSCVEGYLMQPDNRSCK. N-linked (GlcNAc...) asparagine glycosylation is found at N190, N220, N313, and N360. LDL-receptor class B repeat units follow at residues 295 to 337, 338 to 381, and 382 to 425; these read RNLY…DPIA, GKLF…DLVN, and KLVY…FEDY. A glycan (N-linked (GlcNAc...) asparagine) is linked at N443. Residues 471 to 517 form the EGF-like 3 domain; sequence RSHACEVDPYGMPGGCSHICLLSSSYKTRTCRCRTGFNLGSDGRSCK. LDL-receptor class B repeat units follow at residues 568–610, 611–656, 657–706, and 707–750; these read NYIY…DWIG, NNLY…DPVN, GWMY…DFHT, and NTLY…HGNY. 2 N-linked (GlcNAc...) asparagine glycosylation sites follow: N725 and N758. Residues 794 to 834 enclose the EGF-like 4 domain; sequence GDNMCRVNNGGCSTLCLAIPGGRVCACADNQLLDENGTTCT. 6 disulfides stabilise this stretch: C798–C809, C805–C818, C820–C833, C845–C857, C852–C870, and C864–C881. N-linked (GlcNAc...) asparagine glycosylation is present at N829. An LDL-receptor class A 3 domain is found at 844–882; it reads ICKAGEFRCKNRHCIQARWKCDGDDDCLDGSDEDSVNCF. Residue N883 is glycosylated (N-linked (GlcNAc...) asparagine). 7 LDL-receptor class A domains span residues 885-923, 926-963, 966-1003, 1005-1043, 1052-1089, 1094-1132, and 1135-1174; these read SCPDDQFKCQNNRCIPKRWLCDGANDCGSNEDESNQTCT, TCQVDQFSCGNGRCIPRAWLCDREDDCGDQTDEMASCE, TCEPLTQFVCKSGRCISSKWHCDSDDDCGDGSDEVGCV, SCFDNQFRCSSGRCIPGHWACDGDNDCGDFSDEAQINCT, GCNGNEFQCHPDGNCVPDLWRCDGEKDCEDGSDEKGCN, LCDHKTKFSCWSTGRCINKAWVCDGDIDCEDQSDEDDCD, and LCGPPKHPCANDTSVCLQPEKLCNGKKDCPDGSDEGYLCD. 15 disulfide bridges follow: C886/C898, C893/C911, C905/C922, C927/C939, C934/C952, C946/C962, C967/C980, C975/C993, C987/C1002, C1006/C1018, C1013/C1031, C1025/C1042, C1053/C1066, C1060/C1079, and C1073/C1088. N919 is a glycosylation site (N-linked (GlcNAc...) asparagine). The N-linked (GlcNAc...) asparagine glycan is linked to N1041. N1089 is a glycosylation site (N-linked (GlcNAc...) asparagine). Disulfide bonds link C1095/C1109, C1103/C1122, C1116/C1131, C1136/C1150, C1143/C1163, and C1157/C1173. A glycan (N-linked (GlcNAc...) asparagine) is linked at N1145. EGF-like domains are found at residues 1174-1213 and 1214-1253; these read DECSLNNGGCSNHCSVVPGRGIVCSCPEGLQLNKDNKTCE and IVDYCSNHLKCSQVCEQHKHTVKCSCYEGWKLDVDGESCT. A glycan (N-linked (GlcNAc...) asparagine) is linked at N1209. A glycan (N-linked (GlcNAc...) asparagine) is linked at N1298. 5 LDL-receptor class B repeats span residues 1300 to 1346, 1347 to 1389, 1390 to 1436, 1437 to 1480, and 1481 to 1522; these read SLLY…DWIA, GNIY…DPRY, GILF…DHFE, KRIV…LYGS, and EVYW…YHPS. N-linked (GlcNAc...) asparagine glycosylation is found at N1502, N1549, and N1636. In terms of domain architecture, EGF-like 7 spans 1527-1570; that stretch reads APNPCAANDGKGPCSHMCLINHNRSAACACPHLMKLSSDKKTCY. LDL-receptor class B repeat units lie at residues 1618 to 1660, 1661 to 1704, 1705 to 1744, and 1745 to 1787; these read ERLY…DWVS, RNLY…HPVR, GKLYWTDGNTINMANMDGSNSKILFQNQKEPVGLSIDYVE, and NKLY…TIMD. 2 N-linked (GlcNAc...) asparagine glycosylation sites follow: N1754 and N1816. Residues 1834–1875 form the EGF-like 8 domain; it reads GSNSCQLNNGGCSQLCLPTSETTRTCMCTVGYYLQKNRMSCQ. 3 cysteine pairs are disulfide-bonded: C1838/C1849, C1845/C1859, and C1861/C1874. The N-linked (GlcNAc...) asparagine glycan is linked to N1921. LDL-receptor class B repeat units lie at residues 1922-1964, 1965-2007, 2008-2051, and 2052-2095; these read DTIY…DWIA, GNIY…HPEK, GLLF…DYEE, and NKLY…FGAY. N-linked (GlcNAc...) asparagine glycosylation occurs at N1983. N2105 carries N-linked (GlcNAc...) asparagine glycosylation. In terms of domain architecture, EGF-like 9 spans 2143-2183; it reads GTNVCARDNGGCKQLCLYRGNSRRTCACAHGYLAEDGVTCL. 3 disulfides stabilise this stretch: C2147–C2158, C2154–C2168, and C2170–C2182. LDL-receptor class B repeat units follow at residues 2239-2280, 2281-2329, 2330-2374, 2375-2416, and 2417-2459; these read NRIF…HRAW, DTLY…DECQ, NLMF…DYRA, EKLY…VYDN, and YIFW…VAND. N2458, N2488, and N2507 each carry an N-linked (GlcNAc...) asparagine glycan. Residues 2464-2504 enclose the EGF-like 10 domain; that stretch reads ELSPCALLNGGCHDLCLLTPNGRVNCSCRGDRILLEDNRCV. The LDL-receptor class A 11 domain occupies 2509–2548; the sequence is SCNAYSEFECGNGECIDYQLTCDGIPHCKDKSDEKLLYCE. 3 cysteine pairs are disulfide-bonded: C2510-C2523, C2518-C2536, and C2530-C2547. A glycan (N-linked (GlcNAc...) asparagine) is linked at N2549. 6 consecutive LDL-receptor class A domains span residues 2551–2587, 2590–2626, 2629–2675, 2681–2717, 2719–2757, and 2760–2800; these read SCRRGFKPCYNRRCIPHGKLCDGENDCGDNSDELDCK, TCATVEFRCADGTCIPRSARCNQNIDCADASDEKNCN, DCTH…LKCP, KCEENYFSCPSGRCILNTWICDGQKDCEDGRDEFHCD, SCSWNQFACSAQKCISKHWICDGEDDCGDGLDESDSICG, and TCAA…AGCA. Intrachain disulfides connect C2552–C2564, C2559–C2577, C2571–C2586, C2591–C2603, C2598–C2616, and C2610–C2625. Residues N2626 and N2647 are each glycosylated (N-linked (GlcNAc...) asparagine). Intrachain disulfides connect C2630–C2652, C2646–C2665, C2659–C2674, C2682–C2694, C2689–C2707, C2701–C2716, C2720–C2732, C2727–C2745, C2739–C2756, C2761–C2774, C2768–C2787, and C2781–C2799. Residue N2802 is glycosylated (N-linked (GlcNAc...) asparagine). 3 consecutive LDL-receptor class A domains span residues 2804-2841, 2844-2885, and 2890-2926; these read TCDENAFMCHNKVCIPKQFVCDHDDDCGDGSDESPQCG, QCGT…PKCK, and SCNSSFFMCKNGRCIPSGGLCDNKDDCGDGSDERNCH. 15 disulfides stabilise this stretch: C2805-C2817, C2812-C2830, C2824-C2840, C2845-C2857, C2852-C2871, C2865-C2884, C2891-C2903, C2898-C2916, C2910-C2925, C2930-C2942, C2938-C2951, C2953-C2966, C2972-C2982, C2978-C2991, and C2993-C3007. N-linked (GlcNAc...) asparagine glycosylation occurs at N2892. The 41-residue stretch at 2927–2967 folds into the EGF-like 11 domain; sequence INECLSKKVSGCSQDCQDLPVSYKCKCWPGFQLKDDGKTCV. The EGF-like 12; calcium-binding domain occupies 2968 to 3008; the sequence is DIDECSSGFPCSQQCINTYGTYKCLCTDGYEIQPDNPNGCK. 3 N-linked (GlcNAc...) asparagine glycosylation sites follow: N3034, N3066, and N3076. 5 LDL-receptor class B repeats span residues 3055–3098, 3099–3141, 3142–3185, 3186–3224, and 3225–3268; these read EFIY…DWIG, KNLY…DPQA, GYLY…DYVN, RRLYWADENHIEFSNMDGSHRHKVPNQDIPGVIALTLFE, and DYIY…HSYR. An N-linked (GlcNAc...) asparagine glycan is attached at N3164. In terms of domain architecture, EGF-like 13 spans 3273–3314; it reads SKHLCMINNGGCSHLCLLAPGKTHTCACPTNFYLAADNRTCL. N-linked (GlcNAc...) asparagine glycosylation is found at N3310 and N3316. LDL-receptor class A domains follow at residues 3316–3353, 3356–3392, 3395–3432, 3435–3472, 3475–3511, 3514–3550, 3552–3588, 3593–3629, 3631–3668, 3673–3711, 3714–3752, and 3761–3797; these read NCTASQFRCKTDKCIPFWWKCDTVDDCGDGSDEPDDCP, RCQPGRFQCGTGLCALPAFICDGENDCGDNSDELNCD, VCLSGQFKCTKNQKCIPVNLRCNGQDDCGDEEDERDCP, SCSPDYFQCKTTKHCISKLWVCDEDPDCADASDEANCD, TCGPHEFQCKNNNCIPDHWRCDSQNDCSDNSDEENCK, TCTLKDFLCANGDCVSSRFWCDGDFDCADGSDERNCE, SCSKDQFRCSNGQCIPAKWKCDGHEDCKYGEDEKSCE, TCSSREYICASDGCISASLKCNGEYDCADGSDEMDCV, ECKEDQFRCKNKAHCIPIRWLCDGIHDCVDGSDEENCE, ICRADEFLCNNSLCKLHFWVCDGEDDCGDNSDEAPDMCV, LCPSTRPHRCRNNRICLQSEQMCNGIDECGDNSDEDHCG, and PCKKDEFACSNKKCIPMDLQCDRLDDCGDGSDEQGCR. 42 disulfide bridges follow: C3317–C3329, C3324–C3342, C3336–C3352, C3357–C3369, C3364–C3382, C3376–C3391, C3396–C3409, C3403–C3422, C3416–C3431, C3436–C3449, C3443–C3462, C3456–C3471, C3476–C3488, C3483–C3501, C3495–C3510, C3515–C3527, C3522–C3540, C3534–C3549, C3553–C3565, C3560–C3578, C3572–C3587, C3594–C3606, C3601–C3619, C3613–C3628, C3632–C3645, C3639–C3658, C3652–C3667, C3674–C3686, C3681–C3699, C3693–C3710, C3715–C3729, C3723–C3742, C3736–C3751, C3762–C3774, C3769–C3787, C3781–C3796, C3805–C3818, C3812–C3827, C3829–C3842, C3848–C3858, C3854–C3867, and C3869–C3880. N3682 carries N-linked (GlcNAc...) asparagine glycosylation. 2 consecutive EGF-like domains span residues 3801–3843 and 3844–3881; these read TEYT…RQCE and DLNECLVFGTCSHQCINVEGSYKCVCDQNFQERNNTCI. 3 N-linked (GlcNAc...) asparagine glycosylation sites follow: N3877, N3894, and N3906. LDL-receptor class B repeat units follow at residues 3933–3980, 3981–4038, 4039–4082, and 4083–4127; these read DMII…DWVA, GNIY…NPKR, GMMY…DYFS, and ERIY…FEDY. N-linked (GlcNAc...) asparagine glycosylation occurs at N4017. 7 consecutive EGF-like domains span residues 4171–4208, 4213–4249, 4249–4285, 4285–4321, 4321–4357, 4357–4392, and 4390–4427; these read DLPNPCLDLACEFLCLLNPSGATCVCPEGKYLINGTCN, LDDSCKLTCENGGRCILNEKGDLRCHCWPSYSGERCE, EVNHCSNYCQNGGTCVPSVLGRPTCSCALGFTGPNCG, GKTVCEDFCQNGGTCIVTAGNQPYCHCQPEYTGDRCQ, QYYVCHHYCVNSESCTIGDDGSVECVCPTRYEGPKCE, EVDKCVRCHGGHCIINKDSEDIFCNCTNGKIASSCQ, and SCQLCDGYCYNGGTCQLDPETNVPVCLCSTNWSGTQCE. The N-linked (GlcNAc...) asparagine glycan is linked to N4204. 11 disulfides stabilise this stretch: C4217–C4227, C4221–C4237, C4253–C4263, C4257–C4273, C4275–C4284, C4289–C4299, C4293–C4309, C4311–C4320, C4325–C4335, C4329–C4345, and C4347–C4356. Residue N4381 is glycosylated (N-linked (GlcNAc...) asparagine). Disulfide bonds link C4394/C4404, C4398/C4415, and C4417/C4426. N-linked (GlcNAc...) asparagine glycosylation occurs at N4420. The helical transmembrane segment at 4445–4467 threads the bilayer; that stretch reads AIIVPLVLLVTLITTLVIGLVLC. Residues 4468–4599 are Cytoplasmic-facing; it reads KRKRRTKTIR…IEIGIRETVA (132 aa). 2 short sequence motifs (endocytosis signal) span residues 4492–4495 and 4559–4562; these read NPSY and NPVY.

This sequence belongs to the LDLR family. As to quaternary structure, binds LRPAP1, PLAU, PLAT and SERPINE1; binding is followed by internalization and degradation of the ligands. As to expression, expressed in thyroid gland and in salivary gland, as well as in adult and fetal brain.

The protein resides in the membrane. Its function is as follows. Potential cell surface proteins that bind and internalize ligands in the process of receptor-mediated endocytosis. This is Low-density lipoprotein receptor-related protein 1B (LRP1B) from Homo sapiens (Human).